The following is a 284-amino-acid chain: D-tagatose-1,6-bisphosphate aldolase subunit GatY (284 aa).

The Proton donor role is filled by D82. Zn(2+) is bound by residues H83 and H180. G181 is a binding site for dihydroxyacetone phosphate. Residue H208 participates in Zn(2+) binding. Residues G209–S211 and N230–T233 each bind dihydroxyacetone phosphate.

Belongs to the class II fructose-bisphosphate aldolase family. TagBP aldolase GatY subfamily. Forms a complex with GatZ. Zn(2+) serves as cofactor.

It catalyses the reaction D-tagatofuranose 1,6-bisphosphate = D-glyceraldehyde 3-phosphate + dihydroxyacetone phosphate. It functions in the pathway carbohydrate metabolism; D-tagatose 6-phosphate degradation; D-glyceraldehyde 3-phosphate and glycerone phosphate from D-tagatose 6-phosphate: step 2/2. Functionally, catalytic subunit of the tagatose-1,6-bisphosphate aldolase GatYZ, which catalyzes the reversible aldol condensation of dihydroxyacetone phosphate (DHAP or glycerone-phosphate) with glyceraldehyde 3-phosphate (G3P) to produce tagatose 1,6-bisphosphate (TBP). Requires GatZ subunit for full activity and stability. Is involved in the catabolism of galactitol. The chain is D-tagatose-1,6-bisphosphate aldolase subunit GatY (gatY) from Escherichia coli.